The chain runs to 79 residues: MRFIIRTVMLIALVWIGLLLSGYGVLIGSKENAAELGLQCTYLTARGTSTVQYLHTKSGFLGITDCPLLRKSNIVVDNG.

Residues 1–33 (MRFIIRTVMLIALVWIGLLLSGYGVLIGSKENA) form the signal peptide.

This is an uncharacterized protein from Escherichia coli O157:H7.